Reading from the N-terminus, the 440-residue chain is NADH-quinone oxidoreductase subunit H (440 aa).

The next 9 membrane-spanning stretches (helical) occupy residues 11–31, 83–103, 123–143, 164–184, 207–227, 261–281, 299–319, 331–351, and 366–386; these read VWLI…WTIF, IVFN…WSVI, VPVA…GVVL, MISY…FSGS, IAGH…ITMF, FLAE…LFLG, WWGL…FVWV, FMDL…LLVA, and VFLV…FMGG.

Belongs to the complex I subunit 1 family. NDH-1 is composed of 14 different subunits. Subunits NuoA, H, J, K, L, M, N constitute the membrane sector of the complex.

It is found in the cell membrane. It catalyses the reaction a quinone + NADH + 5 H(+)(in) = a quinol + NAD(+) + 4 H(+)(out). In terms of biological role, NDH-1 shuttles electrons from NADH, via FMN and iron-sulfur (Fe-S) centers, to quinones in the respiratory chain. The immediate electron acceptor for the enzyme in this species is believed to be ubiquinone. Couples the redox reaction to proton translocation (for every two electrons transferred, four hydrogen ions are translocated across the cytoplasmic membrane), and thus conserves the redox energy in a proton gradient. This subunit may bind ubiquinone. The sequence is that of NADH-quinone oxidoreductase subunit H from Cutibacterium acnes (strain DSM 16379 / KPA171202) (Propionibacterium acnes).